We begin with the raw amino-acid sequence, 381 residues long: L-lactate dehydrogenase (381 aa).

In terms of domain architecture, FMN hydroxy acid dehydrogenase spans 1-380 (MIISASTDYR…TRDSLVRELG (380 aa)). Residue Tyr-24 coordinates substrate. 2 residues coordinate FMN: Ser-106 and Gln-127. Tyr-129 provides a ligand contact to substrate. Thr-155 contributes to the FMN binding site. Arg-164 provides a ligand contact to substrate. Residue Lys-251 participates in FMN binding. The Proton acceptor role is filled by His-275. Arg-278 is a substrate binding site. Position 306–330 (306–330 (DSGIRSGLDVVRMIALGADTVLIGR)) interacts with FMN.

It belongs to the FMN-dependent alpha-hydroxy acid dehydrogenase family. As to quaternary structure, homotetramer. The cofactor is FMN.

The protein resides in the cell inner membrane. The catalysed reaction is (S)-lactate + A = pyruvate + AH2. Catalyzes the conversion of L-lactate to pyruvate. Is coupled to the respiratory chain. This is L-lactate dehydrogenase from Pseudomonas putida (strain GB-1).